A 254-amino-acid polypeptide reads, in one-letter code: Indole-3-glycerol phosphate synthase (254 aa).

It belongs to the TrpC family.

The enzyme catalyses 1-(2-carboxyphenylamino)-1-deoxy-D-ribulose 5-phosphate + H(+) = (1S,2R)-1-C-(indol-3-yl)glycerol 3-phosphate + CO2 + H2O. The protein operates within amino-acid biosynthesis; L-tryptophan biosynthesis; L-tryptophan from chorismate: step 4/5. This is Indole-3-glycerol phosphate synthase from Methanopyrus kandleri (strain AV19 / DSM 6324 / JCM 9639 / NBRC 100938).